The primary structure comprises 276 residues: Pantothenate synthetase (276 aa).

25-32 (MGYLHRGH) is an ATP binding site. Residue histidine 32 is the Proton donor of the active site. Glutamine 56 is a binding site for (R)-pantoate. Position 56 (glutamine 56) interacts with beta-alanine. 143 to 146 (GEKD) contributes to the ATP binding site. Glutamine 149 serves as a coordination point for (R)-pantoate. ATP-binding positions include valine 172 and 180 to 183 (LSSR).

It belongs to the pantothenate synthetase family. As to quaternary structure, homodimer.

It is found in the cytoplasm. It carries out the reaction (R)-pantoate + beta-alanine + ATP = (R)-pantothenate + AMP + diphosphate + H(+). It functions in the pathway cofactor biosynthesis; (R)-pantothenate biosynthesis; (R)-pantothenate from (R)-pantoate and beta-alanine: step 1/1. Functionally, catalyzes the condensation of pantoate with beta-alanine in an ATP-dependent reaction via a pantoyl-adenylate intermediate. The chain is Pantothenate synthetase from Thermus thermophilus (strain ATCC BAA-163 / DSM 7039 / HB27).